We begin with the raw amino-acid sequence, 227 residues long: Phosphatidylserine decarboxylase proenzyme (227 aa).

Ser184 serves as the catalytic Schiff-base intermediate with substrate; via pyruvic acid. Position 184 is a pyruvic acid (Ser); by autocatalysis (Ser184).

Belongs to the phosphatidylserine decarboxylase family. PSD-A subfamily. In terms of assembly, heterodimer of a large membrane-associated beta subunit and a small pyruvoyl-containing alpha subunit. Requires pyruvate as cofactor. In terms of processing, is synthesized initially as an inactive proenzyme. Formation of the active enzyme involves a self-maturation process in which the active site pyruvoyl group is generated from an internal serine residue via an autocatalytic post-translational modification. Two non-identical subunits are generated from the proenzyme in this reaction, and the pyruvate is formed at the N-terminus of the alpha chain, which is derived from the carboxyl end of the proenzyme. The post-translation cleavage follows an unusual pathway, termed non-hydrolytic serinolysis, in which the side chain hydroxyl group of the serine supplies its oxygen atom to form the C-terminus of the beta chain, while the remainder of the serine residue undergoes an oxidative deamination to produce ammonia and the pyruvoyl prosthetic group on the alpha chain.

The protein localises to the cell membrane. It carries out the reaction a 1,2-diacyl-sn-glycero-3-phospho-L-serine + H(+) = a 1,2-diacyl-sn-glycero-3-phosphoethanolamine + CO2. It participates in phospholipid metabolism; phosphatidylethanolamine biosynthesis; phosphatidylethanolamine from CDP-diacylglycerol: step 2/2. Its function is as follows. Catalyzes the formation of phosphatidylethanolamine (PtdEtn) from phosphatidylserine (PtdSer). The protein is Phosphatidylserine decarboxylase proenzyme of Ehrlichia ruminantium (strain Welgevonden).